Consider the following 186-residue polypeptide: CRS2-like protein, chloroplastic (186 aa).

A chloroplast-targeting transit peptide spans 1-49 (MAMTAASVFGSGGCLELLTSSKAMRGKLWTRLAPFISKRHASTSQTSLS). Tyr73 lines the tRNA pocket. Residue His78 is the Proton acceptor of the active site. TRNA contacts are provided by Tyr123, Asn125, and Asn171.

This sequence belongs to the PTH family.

Its subcellular location is the plastid. It localises to the chloroplast. In Oryza sativa subsp. japonica (Rice), this protein is CRS2-like protein, chloroplastic.